We begin with the raw amino-acid sequence, 371 residues long: Ubiquitin receptor RAD23b (371 aa).

In terms of domain architecture, Ubiquitin-like spans 1 to 79 (MKLTVKTLKG…LVVMLSKSKS (79 aa)). The segment covering 79–117 (SGGSAGQASVQTSSVSQPVSATTSSTKPAAPSTTQSSPV) has biased composition (low complexity). The interval 79–142 (SGGSAGQASV…DTYGQAASTL (64 aa)) is disordered. Polar residues predominate over residues 128-142 (PAAQTDTYGQAASTL). Residues 146–189 (SSLEQMVQQIMEMGGGSWDKETVTRALRAAYNNPERAVDYLYSG) enclose the UBA 1 domain. In terms of domain architecture, STI1 spans 242-285 (GTLEFLRNNDQFQQLRTMVHSNPQILQPMLQELGKQNPQLLRLI). Residues 325–365 (PAEQEAIQRLEAMGFDRALVIEAFLACDRNEELAANYLLEN) enclose the UBA 2 domain.

This sequence belongs to the RAD23 family. In terms of assembly, interacts with 'Lys-48'-linked polyubiquitin chains. Interacts with RPN10 via its ubiquitin-like domain. Interacts with UBQ1, UBQ2, UBQ5, UBQ7, UBQ10, UBQ11 and IAA16. Binds to RAD4. Widely expressed in the whole plant.

The protein localises to the nucleus. Its subcellular location is the cytoplasm. In terms of biological role, may be involved in nucleotide excision repair. Binds and presumably selects ubiquitin-conjugates for destruction. Prefers multiubiquitin chains rather than single ubiquitins, with a binding affinity for 'Lys-48'-linked ubiquitin chains. Acts as a ubiquitin receptor that associates with the 26S proteasomal docking subunit RPN10 for the indirect recognition of ubiquitinated substrates of ubiquitin/26S proteasome-mediated proteolysis (UPP). Involved in UV tolerance in both roots and hypocotyls, specifically in dark conditions. The chain is Ubiquitin receptor RAD23b from Arabidopsis thaliana (Mouse-ear cress).